The chain runs to 426 residues: 3-phosphoshikimate 1-carboxyvinyltransferase (426 aa).

Residues lysine 22, serine 23, and arginine 27 each contribute to the 3-phosphoshikimate site. Lysine 22 provides a ligand contact to phosphoenolpyruvate. The phosphoenolpyruvate site is built by glycine 96 and arginine 124. 3-phosphoshikimate is bound by residues serine 170, serine 171, glutamine 172, serine 198, aspartate 314, asparagine 337, and lysine 341. Residue glutamine 172 participates in phosphoenolpyruvate binding. Aspartate 314 functions as the Proton acceptor in the catalytic mechanism. Phosphoenolpyruvate contacts are provided by arginine 345, arginine 387, and lysine 412.

This sequence belongs to the EPSP synthase family. Monomer.

The protein resides in the cytoplasm. The catalysed reaction is 3-phosphoshikimate + phosphoenolpyruvate = 5-O-(1-carboxyvinyl)-3-phosphoshikimate + phosphate. It functions in the pathway metabolic intermediate biosynthesis; chorismate biosynthesis; chorismate from D-erythrose 4-phosphate and phosphoenolpyruvate: step 6/7. In terms of biological role, catalyzes the transfer of the enolpyruvyl moiety of phosphoenolpyruvate (PEP) to the 5-hydroxyl of shikimate-3-phosphate (S3P) to produce enolpyruvyl shikimate-3-phosphate and inorganic phosphate. This chain is 3-phosphoshikimate 1-carboxyvinyltransferase, found in Vibrio atlanticus (strain LGP32) (Vibrio splendidus (strain Mel32)).